The primary structure comprises 452 residues: Probable carboxypeptidase ACLA_088580 (452 aa).

The signal sequence occupies residues 1 to 18 (MRSLTLLLSLSTALRSVA). Asparagine 107 and asparagine 156 each carry an N-linked (GlcNAc...) asparagine glycan. Aspartate 175 is a binding site for Zn(2+). Glutamate 207 (proton acceptor) is an active-site residue. A Zn(2+)-binding site is contributed by glutamate 208.

Belongs to the peptidase M20A family. Zn(2+) serves as cofactor.

The protein resides in the secreted. This chain is Probable carboxypeptidase ACLA_088580, found in Aspergillus clavatus (strain ATCC 1007 / CBS 513.65 / DSM 816 / NCTC 3887 / NRRL 1 / QM 1276 / 107).